The following is a 264-amino-acid chain: Thymidylate synthase (264 aa).

Residue Arg21 coordinates dUMP. His51 is a binding site for (6R)-5,10-methylene-5,6,7,8-tetrahydrofolate. Residue 126-127 (RR) coordinates dUMP. The active-site Nucleophile is Cys146. Residues 166 to 169 (RSCD), Asn177, and 207 to 209 (HLY) contribute to the dUMP site. Position 169 (Asp169) interacts with (6R)-5,10-methylene-5,6,7,8-tetrahydrofolate. Ala263 lines the (6R)-5,10-methylene-5,6,7,8-tetrahydrofolate pocket.

The protein belongs to the thymidylate synthase family. Bacterial-type ThyA subfamily. In terms of assembly, homodimer.

It localises to the cytoplasm. The catalysed reaction is dUMP + (6R)-5,10-methylene-5,6,7,8-tetrahydrofolate = 7,8-dihydrofolate + dTMP. Its pathway is pyrimidine metabolism; dTTP biosynthesis. Its function is as follows. Catalyzes the reductive methylation of 2'-deoxyuridine-5'-monophosphate (dUMP) to 2'-deoxythymidine-5'-monophosphate (dTMP) while utilizing 5,10-methylenetetrahydrofolate (mTHF) as the methyl donor and reductant in the reaction, yielding dihydrofolate (DHF) as a by-product. This enzymatic reaction provides an intracellular de novo source of dTMP, an essential precursor for DNA biosynthesis. The polypeptide is Thymidylate synthase (Escherichia fergusonii (strain ATCC 35469 / DSM 13698 / CCUG 18766 / IAM 14443 / JCM 21226 / LMG 7866 / NBRC 102419 / NCTC 12128 / CDC 0568-73)).